Reading from the N-terminus, the 343-residue chain is Cathepsin Q (343 aa).

An N-terminal signal peptide occupies residues 1-20 (MTPAVFLVILCLGVVPGASA). Residues 21-124 (LDLSLDVQWQ…FPNSWNWRDA (104 aa)) constitute a propeptide, activation peptide. Intrachain disulfides connect C146-C189 and C180-C222. The active site involves C149. N228 carries an N-linked (GlcNAc...) asparagine glycan. The cysteines at positions 280 and 332 are disulfide-linked. Residue H286 is part of the active site. N298 is a glycosylation site (N-linked (GlcNAc...) asparagine). Residue N310 is part of the active site.

The protein belongs to the peptidase C1 family. In terms of tissue distribution, highly expressed in placenta.

It localises to the lysosome. The chain is Cathepsin Q (Ctsq) from Rattus norvegicus (Rat).